The chain runs to 321 residues: MGGMSENTPRYASGVALVNVVISGEHAGTVLDAWFPAPSLTQTPDLSIADELEDLAVEHPARNARTEVRSASINLDEAPEDAVDAYLRLHLLSHTLVRPNELNLDGLFGTLANVAWTNHGPVLAAEFQKLAIGLRKLGHLSVSHIDKFPRLVDYVVPAGVRIGDGDRLRLGAHLASGTTVMHEGFVNFNAGTLGTSMVEGRISQGVVVGDGSDVGGGASTMGTLSGGGKKRVSIGERSLLGAESGIGIALGDDCVVEAGLYVTAGSRVSVLLPGQEARVVKAAELSGVSNLLFRRNSLSGAIEVLPRAKNTVELNEALHLN.

Mg(2+)-binding residues include Asp166 and Glu183. Glu199 (acyl-anhydride intermediate) is an active-site residue. Succinyl-CoA-binding positions include Arg201, Gly216, Ser219, Ala242, 257–258 (EA), Gly265, Lys281, and 294–297 (RRNS).

This sequence belongs to the type 2 tetrahydrodipicolinate N-succinyltransferase family. As to quaternary structure, homotrimer.

The protein resides in the cytoplasm. The catalysed reaction is (S)-2,3,4,5-tetrahydrodipicolinate + succinyl-CoA + H2O = (S)-2-succinylamino-6-oxoheptanedioate + CoA. It participates in amino-acid biosynthesis; L-lysine biosynthesis via DAP pathway; LL-2,6-diaminopimelate from (S)-tetrahydrodipicolinate (succinylase route): step 1/3. Its function is as follows. Catalyzes the conversion of the cyclic tetrahydrodipicolinate (THDP) into the acyclic N-succinyl-L-2-amino-6-oxopimelate using succinyl-CoA. In Rothia mucilaginosa (strain DY-18) (Stomatococcus mucilaginosus), this protein is 2,3,4,5-tetrahydropyridine-2,6-dicarboxylate N-succinyltransferase.